A 154-amino-acid polypeptide reads, in one-letter code: Myoglobin (154 aa).

The 147-residue stretch at 2-148 (VLSDGEWQLV…FRKDIAAKYK (147 aa)) folds into the Globin domain. Residue S4 is modified to Phosphoserine. H65 is a binding site for nitrite. O2 is bound at residue H65. Position 68 is a phosphothreonine (T68). H94 is a binding site for heme b.

The protein belongs to the globin family. Monomeric.

It localises to the cytoplasm. The protein resides in the sarcoplasm. The catalysed reaction is Fe(III)-heme b-[protein] + nitric oxide + H2O = Fe(II)-heme b-[protein] + nitrite + 2 H(+). It catalyses the reaction H2O2 + AH2 = A + 2 H2O. Its function is as follows. Monomeric heme protein which primary function is to store oxygen and facilitate its diffusion within muscle tissues. Reversibly binds oxygen through a pentacoordinated heme iron and enables its timely and efficient release as needed during periods of heightened demand. Depending on the oxidative conditions of tissues and cells, and in addition to its ability to bind oxygen, it also has a nitrite reductase activity whereby it regulates the production of bioactive nitric oxide. Under stress conditions, like hypoxia and anoxia, it also protects cells against reactive oxygen species thanks to its pseudoperoxidase activity. This chain is Myoglobin, found in Balaena mysticetus (Bowhead whale).